Consider the following 942-residue polypeptide: ATP-dependent RNA helicase DDX42 (942 aa).

Over residues 1–18 (MNWNKGGPGTKRGFGFGG) the composition is skewed to gly residues. Residues 1-114 (MNWNKGGPGT…KPIDSDSDDD (114 aa)) form a disordered region. Lys-5 is modified (N6-acetyllysine). Arg-12 carries the post-translational modification Omega-N-methylarginine. A compositionally biased stretch (low complexity) spans 35-52 (SHSAFGATSSSSGFGKSA). Ser-58 carries the phosphoserine modification. A compositionally biased stretch (acidic residues) spans 70–84 (DEENAYFEDEEEDSS). Phosphoserine occurs at positions 96, 104, 109, and 111. A coiled-coil region spans residues 116-157 (LEAFMAEVEDQAARDMKRLEEKDKERKNVKGIRDDIEEEDDQ). The segment at 182-203 (EYDSDGNPIAPTKKIIDPLPPI) is disordered. Residue Ser-185 is modified to Phosphoserine. The short motif at 253 to 281 (SSFAHFGFDEQLMHQIRKSEYTQPTPIQC) is the Q motif element. The 176-residue stretch at 284-459 (VPVALSGRDM…RDILIDPIRV (176 aa)) folds into the Helicase ATP-binding domain. Residue 297–304 (AKTGSGKT) coordinates ATP. The DEAD box motif lies at 407–410 (DEAD). The Helicase C-terminal domain maps to 487–632 (WLTRRLVEFT…HVSKELLDLA (146 aa)). Composition is skewed to polar residues over residues 737–760 (LNSV…TSAT) and 786–798 (GVNN…NSRE). Disordered regions lie at residues 737-762 (LNSV…ATKG) and 783-942 (GAQG…RWDS). Residues 738 to 833 (NSVPTNSAQQ…TGNRHSDSPR (96 aa)) are necessary for interaction with TP53BP2. At Ser-754 the chain carries Phosphoserine. The span at 820–924 (SHGETGNRHS…KVDSKTDKTA (105 aa)) shows a compositional bias: basic and acidic residues. Lys-899 is covalently cross-linked (Glycyl lysine isopeptide (Lys-Gly) (interchain with G-Cter in SUMO2)).

Belongs to the DEAD box helicase family. DDX42 subfamily. In terms of assembly, transient component of the SF3B subcomplex of the 17S U2 SnRNP complex. Interacts (via the C-terminus) with TP53BP2; the interaction is not inhibitied by TP53BP2 ubiquitination and is independent of p53/TP53.

The protein resides in the cytoplasm. The protein localises to the nucleus. The catalysed reaction is ATP + H2O = ADP + phosphate + H(+). ATP-dependent RNA helicase that binds to partially double-stranded RNAs (dsRNAs) in order to unwind RNA secondary structures. Unwinding is promoted in the presence of single-strand binding proteins. Also mediates RNA duplex formation thereby displacing the single-strand RNA binding protein. ATP and ADP modulate its activity: ATP binding and hydrolysis by DDX42 triggers RNA strand separation, whereas the ADP-bound form of the protein triggers annealing of complementary RNA strands. Required for assembly of the 17S U2 SnRNP complex of the spliceosome, a large ribonucleoprotein complex that removes introns from transcribed pre-mRNAs: DDX42 associates transiently with the SF3B subcomplex of the 17S U2 SnRNP complex and is released after fulfilling its role in the assembly of 17S U2 SnRNP. Involved in the survival of cells by interacting with TP53BP2 and thereby counteracting the apoptosis-stimulating activity of TP53BP2. Relocalizes TP53BP2 to the cytoplasm. The protein is ATP-dependent RNA helicase DDX42 (DDX42) of Pongo abelii (Sumatran orangutan).